Here is a 396-residue protein sequence, read N- to C-terminus: Phosphoglycerate kinase (396 aa).

Residues 21–23 (DFN), Arg36, 59–62 (HLGK), Arg119, and Arg156 each bind substrate. ATP is bound by residues Lys206, Gly294, Glu325, and 352-355 (GGDS).

It belongs to the phosphoglycerate kinase family. Monomer.

It localises to the cytoplasm. The catalysed reaction is (2R)-3-phosphoglycerate + ATP = (2R)-3-phospho-glyceroyl phosphate + ADP. It functions in the pathway carbohydrate degradation; glycolysis; pyruvate from D-glyceraldehyde 3-phosphate: step 2/5. In Listeria welshimeri serovar 6b (strain ATCC 35897 / DSM 20650 / CCUG 15529 / CIP 8149 / NCTC 11857 / SLCC 5334 / V8), this protein is Phosphoglycerate kinase.